A 296-amino-acid chain; its full sequence is Probable endonuclease 4 (296 aa).

Zn(2+) contacts are provided by histidine 68, histidine 109, glutamate 144, aspartate 178, histidine 181, histidine 213, aspartate 226, histidine 228, and glutamate 258.

This sequence belongs to the AP endonuclease 2 family. It depends on Zn(2+) as a cofactor.

The catalysed reaction is Endonucleolytic cleavage to 5'-phosphooligonucleotide end-products.. Functionally, endonuclease IV plays a role in DNA repair. It cleaves phosphodiester bonds at apurinic or apyrimidinic (AP) sites, generating a 3'-hydroxyl group and a 5'-terminal sugar phosphate. In Pediococcus pentosaceus (strain ATCC 25745 / CCUG 21536 / LMG 10740 / 183-1w), this protein is Probable endonuclease 4.